Reading from the N-terminus, the 78-residue chain is Acyl carrier protein (78 aa).

The Carrier domain maps to 2–77 (SDIEARVKKI…NAIDYANTHQ (76 aa)). An O-(pantetheine 4'-phosphoryl)serine modification is found at S37.

This sequence belongs to the acyl carrier protein (ACP) family. 4'-phosphopantetheine is transferred from CoA to a specific serine of apo-ACP by AcpS. This modification is essential for activity because fatty acids are bound in thioester linkage to the sulfhydryl of the prosthetic group.

It localises to the cytoplasm. The protein operates within lipid metabolism; fatty acid biosynthesis. Carrier of the growing fatty acid chain in fatty acid biosynthesis. In Comamonas testosteroni (Pseudomonas testosteroni), this protein is Acyl carrier protein.